The following is a 381-amino-acid chain: Cyclic AMP-AMP-GMP synthase (381 aa).

6 residues coordinate ATP: Gln51, Ser53, Arg56, Asp69, Asp71, and Arg109. Catalysis depends on residues Asp69 and Asp71. The Mg(2+) site is built by Asp69 and Asp71. Asp121 is an active-site residue. The Mg(2+) site is built by Asp121 and Asp196. ATP contacts are provided by Asp196, Arg197, Arg204, Thr205, Gln210, Lys233, and Tyr250. Mg(2+) contacts are provided by Asn258 and Leu260. Residues Val304 and Arg307 each contribute to the ATP site. Residues 348-381 (GSKFPLPGPQGGDRNGGFTTPSKPAEPQKTGRFA) are disordered.

This sequence belongs to the CD-NTase family. D02 subfamily. Monomer. Crystallizes as a Cap2 homodimer bound on each side by a CdnD monomer. Mg(2+) is required as a cofactor. Post-translationally, in bacteria expressing cap4-dncV-cap2-cap3, this protein is conjugated to a number of other proteins by Cap2, probably via this protein's C-terminal Ala residue. More conjugated DncV is found in the absence of Cap3.

The enzyme catalyses GTP + 2 ATP = 3',3',3'-cAAG + 3 diphosphate. Its activity is regulated as follows. Primed for activation by Cap2 which conjugates it to cellular proteins; activation is target protein-specific (green fluorescent protein does not activate the enzyme), but which protein(s) activate it is unclear. In terms of biological role, cyclic nucleotide synthase (second messenger synthase) of a CBASS antivirus system. CBASS (cyclic oligonucleotide-based antiphage signaling system) provides immunity against bacteriophages. The CD-NTase protein (CdnD, this protein) synthesizes cyclic nucleotides in response to infection; these serve as specific second messenger signals. The signals activate a diverse range of effectors, leading to bacterial cell death and thus abortive phage infection. A type II-C(AAG) CBASS system. Its function is as follows. Cyclic trinucleotide synthase that catalyzes the synthesis of 3',3',3'-cyclic AMP-AMP-GMP (cAAG) as the major product, a second messenger for cell signal transduction. Uses ATP as the first donor nucleotide, followed by GTP. Protects E.coli against phage T2 infection. When the cdnD-cap2-cap3-cap4 operon is introduced in E.coli there is a more than 10(3) decrease in the efficiency of T2 plaque formation. The operon does not protect against phage T5 and only about 10-fold against T7. Expression of cdnD-cap4 alone protects E.coli against phage T2 infection. The chain is Cyclic AMP-AMP-GMP synthase from Enterobacter hormaechei subsp. hoffmannii (strain UCI 50).